The following is a 406-amino-acid chain: Phosphorylase b kinase gamma catalytic chain, liver/testis isoform (406 aa).

The Protein kinase domain maps to 24 to 291 (YDPKDIIGRG…AEQALQHPFF (268 aa)). ATP-binding positions include 30 to 38 (IGRGVSSVV) and Lys53. Asp153 (proton acceptor) is an active-site residue. Residues 306-330 (QRFRVAVWTILAAGRVALSSHRLRP) form a calmodulin-binding (domain-N) region. The segment at 346-370 (VRRLIDNCAFRLYGHWVKKGEQQNR) is calmodulin-binding (domain-C).

Belongs to the protein kinase superfamily. CAMK Ser/Thr protein kinase family. Hexadecamer of 4 heterotetramers, each composed of alpha, beta, gamma, and delta subunits. Alpha (PHKA1 or PHKA2) and beta (PHKB) are regulatory subunits, gamma (PHKG1 or PHKG2) is the catalytic subunit, and delta is calmodulin.

The enzyme catalyses 2 ATP + phosphorylase b = 2 ADP + phosphorylase a.. In terms of biological role, catalytic subunit of the phosphorylase b kinase (PHK), which mediates the neural and hormonal regulation of glycogen breakdown (glycogenolysis) by phosphorylating and thereby activating glycogen phosphorylase. May regulate glycogeneolysis in the testis. In vitro, phosphorylates PYGM. This is Phosphorylase b kinase gamma catalytic chain, liver/testis isoform (Phkg2) from Mus musculus (Mouse).